A 510-amino-acid polypeptide reads, in one-letter code: Abscisic acid 8'-hydroxylase 2 (510 aa).

A helical membrane pass occupies residues 3–23; that stretch reads FLLFFVFVTAAVLCFVVPAFL. Heme is bound at residue cysteine 441.

This sequence belongs to the cytochrome P450 family. It depends on heme as a cofactor.

The protein resides in the membrane. It catalyses the reaction 2-cis-(+)-abscisate + reduced [NADPH--hemoprotein reductase] + O2 = (+)-8'-hydroxyabscisate + oxidized [NADPH--hemoprotein reductase] + H2O + H(+). It participates in plant hormone degradation; abscisic acid degradation. Its function is as follows. Involved in the oxidative degradation of abscisic acid. The chain is Abscisic acid 8'-hydroxylase 2 (CYP707A6) from Oryza sativa subsp. japonica (Rice).